The primary structure comprises 158 residues: Protein Smg homolog (158 aa).

It belongs to the Smg family.

This chain is Protein Smg homolog, found in Alteromonas mediterranea (strain DSM 17117 / CIP 110805 / LMG 28347 / Deep ecotype).